A 166-amino-acid polypeptide reads, in one-letter code: Nucleotide-binding protein Dred_1927 (166 aa).

This sequence belongs to the YajQ family.

In terms of biological role, nucleotide-binding protein. The polypeptide is Nucleotide-binding protein Dred_1927 (Desulforamulus reducens (strain ATCC BAA-1160 / DSM 100696 / MI-1) (Desulfotomaculum reducens)).